The chain runs to 428 residues: RUN domain-containing protein 3A (428 aa).

The RUN domain occupies 52–182 (DDSSEEFINF…IDFSFCLKGE (131 aa)). Residues 237–314 (ESWRNKCRKM…ELQEQLTSLI (78 aa)) adopt a coiled-coil conformation. Residues 349–375 (HRGSFPSPEPHISLTTGSQRTERKQNG) are disordered.

Belongs to the RUNDC3 family.

The chain is RUN domain-containing protein 3A (rundc3a) from Danio rerio (Zebrafish).